The chain runs to 98 residues: MYTNSHDIIRKPVITEKSMAEMADKKYTFIVDPHANKVQIKKAIEEVFGVKVEKVNTSNILGKTKRVGVHVGKRADYKKAIVKLTEDSKAIEFFEGMQ.

It belongs to the universal ribosomal protein uL23 family. In terms of assembly, part of the 50S ribosomal subunit. Contacts protein L29, and trigger factor when it is bound to the ribosome.

In terms of biological role, one of the early assembly proteins it binds 23S rRNA. One of the proteins that surrounds the polypeptide exit tunnel on the outside of the ribosome. Forms the main docking site for trigger factor binding to the ribosome. The protein is Large ribosomal subunit protein uL23 of Clostridium acetobutylicum (strain ATCC 824 / DSM 792 / JCM 1419 / IAM 19013 / LMG 5710 / NBRC 13948 / NRRL B-527 / VKM B-1787 / 2291 / W).